A 281-amino-acid polypeptide reads, in one-letter code: Imidazoleglycerol-phosphate dehydratase, chloroplastic (281 aa).

A chloroplast-targeting transit peptide spans 1–85 (MELYAASHSL…TSLPFHPETR (85 aa)). Residues glutamate 95, 121–129 (HMLDQLASH), 147–151 (HHTNE), arginine 173, and arginine 195 contribute to the substrate site. Positions 121, 147, 148, and 151 each coordinate Mn(2+). Mn(2+)-binding residues include histidine 219, histidine 243, histidine 244, and glutamate 247. Substrate contacts are provided by residues 243–251 (HHIIEATFK) and 273–275 (SSK).

This sequence belongs to the imidazoleglycerol-phosphate dehydratase family. It depends on Mn(2+) as a cofactor.

The protein resides in the plastid. It is found in the chloroplast. The enzyme catalyses D-erythro-1-(imidazol-4-yl)glycerol 3-phosphate = 3-(imidazol-4-yl)-2-oxopropyl phosphate + H2O. Its pathway is amino-acid biosynthesis; L-histidine biosynthesis; L-histidine from 5-phospho-alpha-D-ribose 1-diphosphate: step 6/9. The protein is Imidazoleglycerol-phosphate dehydratase, chloroplastic of Pisum sativum (Garden pea).